Here is a 271-residue protein sequence, read N- to C-terminus: Putative pyrimidine-specific ribonucleoside hydrolase RihB (271 aa).

The substrate site is built by Gln185 and His197.

This sequence belongs to the IUNH family. RihB subfamily.

It carries out the reaction a pyrimidine ribonucleoside + H2O = a pyrimidine nucleobase + D-ribose. This Shigella dysenteriae serotype 1 (strain Sd197) protein is Putative pyrimidine-specific ribonucleoside hydrolase RihB (rihB).